The primary structure comprises 132 residues: Transcription antitermination protein NusB (132 aa).

It belongs to the NusB family.

Its function is as follows. Involved in transcription antitermination. Required for transcription of ribosomal RNA (rRNA) genes. Binds specifically to the boxA antiterminator sequence of the ribosomal RNA (rrn) operons. This chain is Transcription antitermination protein NusB, found in Lachnoclostridium phytofermentans (strain ATCC 700394 / DSM 18823 / ISDg) (Clostridium phytofermentans).